Here is a 178-residue protein sequence, read N- to C-terminus: ATP-dependent protease subunit HslV (178 aa).

The active site involves Thr7. Na(+) is bound by residues Gly162, Cys165, and Thr168.

It belongs to the peptidase T1B family. HslV subfamily. A double ring-shaped homohexamer of HslV is capped on each side by a ring-shaped HslU homohexamer. The assembly of the HslU/HslV complex is dependent on binding of ATP.

Its subcellular location is the cytoplasm. It catalyses the reaction ATP-dependent cleavage of peptide bonds with broad specificity.. With respect to regulation, allosterically activated by HslU binding. In terms of biological role, protease subunit of a proteasome-like degradation complex believed to be a general protein degrading machinery. The chain is ATP-dependent protease subunit HslV from Dechloromonas aromatica (strain RCB).